A 406-amino-acid chain; its full sequence is RILP-like protein 1 (406 aa).

One can recognise an RH1 domain in the interval 5–99; it reads QLGAALDKSA…LEKEKKHKKE (95 aa). Positions 105 to 319 form a coiled coil; it reads DVWRGEAQDL…KVFMLQEEIA (215 aa). 2 disordered regions span residues 234 to 272 and 323 to 351; these read EVSS…PAQE and SEEQ…NFQP. The span at 241–257 shows a compositional bias: basic and acidic residues; it reads EVSRLKEKLKEQSRSNE. One can recognise an RH2 domain in the interval 289–358; sequence RPRFTLQELR…FQPESGIKRL (70 aa). The segment covering 340–351 has biased composition (polar residues); sequence TLRTNPRSNFQP.

Belongs to the RILPL family.

Its subcellular location is the cytoplasm. It localises to the cytosol. The protein resides in the cytoskeleton. It is found in the microtubule organizing center. The protein localises to the centrosome. Its subcellular location is the cell projection. It localises to the cilium. Plays a role in the regulation of cell shape and polarity. Plays a role in cellular protein transport, including protein transport away from primary cilia. Neuroprotective protein. The protein is RILP-like protein 1 (rilpl1) of Danio rerio (Zebrafish).